A 625-amino-acid polypeptide reads, in one-letter code: Alpha-protein kinase vwkA (625 aa).

Residues 1 to 15 (MESKYVLSTEKESKT) show a composition bias toward basic and acidic residues. Residues 1–64 (MESKYVLSTE…GLSSGGSKTH (64 aa)) are disordered. 2 stretches are compositionally biased toward polar residues: residues 25 to 39 (DMDS…TSLG) and 46 to 63 (SLKT…GSKT). Residues 87–114 (TKDSITLAKEKEKKIEKRNEEIKLTFKA) are a coiled coil. A VWFA domain is found at 122–322 (DLLFIVDCTG…KMNERIFISI (201 aa)). The Alpha-type protein kinase domain occupies 386 to 600 (TCLSSSYEMK…HCKKLGLTIP (215 aa)). Residue 570–576 (GSCNLGK) coordinates ATP. The interval 602-625 (FTSSSSTSSSSRSTSSSSSISYSY) is disordered.

This sequence belongs to the protein kinase superfamily. Alpha-type protein kinase family. ALPK subfamily. Interacts with calmodulin; in the presence of calcium. Autophosphorylated, in vitro.

It is found in the cytoplasm. The protein localises to the cytosol. The protein resides in the perinuclear region. Its subcellular location is the contractile vacuole membrane. The catalysed reaction is L-seryl-[protein] + ATP = O-phospho-L-seryl-[protein] + ADP + H(+). The enzyme catalyses L-threonyl-[protein] + ATP = O-phospho-L-threonyl-[protein] + ADP + H(+). With respect to regulation, autophosphorylation activity enhanced by calcium/calmodulin. Functionally, displays a modest preference for threonine over serine residues. Does not phosphorylate myosin II, however can phosphorylate MBP, in vitro. May be involved in the regulation of myosin II function during cytokinesis. Overexpression leads to impaired cell proliferation in suspension culture and fails to develop beyond the mound stage. Both overexpression and absence of the gene can result in defects in cytokinesis and alterations in myosin II abundance and assembly. This chain is Alpha-protein kinase vwkA (vwkA), found in Dictyostelium discoideum (Social amoeba).